The sequence spans 251 residues: Probable phosphatase Sputw3181_2734 (251 aa).

Zn(2+)-binding residues include His-8, His-10, His-16, His-41, Glu-74, His-102, His-132, Asp-193, and His-195.

It belongs to the PHP family. Zn(2+) serves as cofactor.

The protein is Probable phosphatase Sputw3181_2734 of Shewanella sp. (strain W3-18-1).